The following is a 305-amino-acid chain: Homoserine O-acetyltransferase (305 aa).

Cys142 functions as the Acyl-thioester intermediate in the catalytic mechanism. The substrate site is built by Lys163 and Ser192. His235 acts as the Proton acceptor in catalysis. Glu237 is an active-site residue. Substrate is bound at residue Arg249.

It belongs to the MetA family.

It is found in the cytoplasm. The catalysed reaction is L-homoserine + acetyl-CoA = O-acetyl-L-homoserine + CoA. It functions in the pathway amino-acid biosynthesis; L-methionine biosynthesis via de novo pathway; O-acetyl-L-homoserine from L-homoserine: step 1/1. Functionally, transfers an acetyl group from acetyl-CoA to L-homoserine, forming acetyl-L-homoserine. The protein is Homoserine O-acetyltransferase of Cereibacter sphaeroides (strain KD131 / KCTC 12085) (Rhodobacter sphaeroides).